The chain runs to 921 residues: MEYKNTLLMPKTEFPMRGNLPKREPAMQEKWAEMNIYEKVQEHTKGRPLFVLHDGPPYANGDIHMGHALNKVLKDFIVRYKSMTGFCAPYVPGWDTHGLPIEQALTNKGVKRKEMTVAEFRKLCAEYAYEQVERQREQFKRLGVRADWDNPYITLEPAYEAQQIKVFGDMAKKGYIYKGQKPVYWSPTSESALAEAEIEYQDKKSASIYVAFPVKDGKNVLEGDEKYIIWTTTPWTLPANLGISVHPELEYAIVKVNDEKYIIASELFETVAKTLEWENAEVVKTVKGSELEYTVAKHPFYDRDSLVMLGDHVTTDAGTGCVHTAPGHGEDDFIVGKKYGLEVLCPVDDKGVLTEEAPGFEGLFYDKANKPITEKLEEVGALLKLTFITHSYPHDWRTKKPIIFRATAQWFASIEAFRKELLEAVAETKWVPAWGETRLHNMVRDRGDWCISRQRAWGVPIPVFYAENGDPIITDETINHVADLFREHGSNVWFEREAKDLLPEGFTHPGSPNGEFRKETDIMDVWFDSGSSHQAVLEERDDLQRPADLYLEGSDQYRGWFNSSLSTAVAVTGKAPYKGVLSHGFVLDGEGRKMSKSIGNIVVPKKIMDQLGGDILRLWVSSVDYQSDVRISDDILKQVAEVYRKIRNTFRFLLGNLDDFKPSENTVAVAELREVDRYMLVKLNDLITKVKEAYETYDFAAVYHAIHNFCTIDLSSFYLDFAKDILYIEGANHEDRRAIQTVLYDVLVALTKLVTPILPHTADEVWPYIPGVTEESVQLTDMPEAVQLDDAEALKTKWDAFMTLRDDVLKALEVARNEKVIGKSLNASITLYPTAEMKAMLESINEDLKQLFIVSEYKLGGMMEEAPADAPKYEHTAVVVAQATGETCERCWVVSETIGKDAEHETLCERCATVVKENYVK.

A 'HIGH' region motif is present at residues 57-67 (PYANGDIHMGH). Glu552 is an L-isoleucyl-5'-AMP binding site. A 'KMSKS' region motif is present at residues 593 to 597 (KMSKS). ATP is bound at residue Lys596. Residues Cys888, Cys891, Cys908, and Cys911 each coordinate Zn(2+).

Belongs to the class-I aminoacyl-tRNA synthetase family. IleS type 1 subfamily. Monomer. Zn(2+) is required as a cofactor.

It is found in the cytoplasm. It catalyses the reaction tRNA(Ile) + L-isoleucine + ATP = L-isoleucyl-tRNA(Ile) + AMP + diphosphate. Functionally, catalyzes the attachment of isoleucine to tRNA(Ile). As IleRS can inadvertently accommodate and process structurally similar amino acids such as valine, to avoid such errors it has two additional distinct tRNA(Ile)-dependent editing activities. One activity is designated as 'pretransfer' editing and involves the hydrolysis of activated Val-AMP. The other activity is designated 'posttransfer' editing and involves deacylation of mischarged Val-tRNA(Ile). The polypeptide is Isoleucine--tRNA ligase (Bacillus cereus (strain AH820)).